The sequence spans 660 residues: Bifunctional polymyxin resistance protein ArnA (660 aa).

Residues 1-304 are formyltransferase ArnAFT; sequence MKAVVFAYHD…TLGLVEGSRL (304 aa). The active-site Proton donor; for formyltransferase activity is the H104. (6R)-10-formyltetrahydrofolate-binding positions include R114 and 136–140; that span reads VAKAD. The tract at residues 314 to 660 is dehydrogenase ArnADH; the sequence is RRTRVLILGV…RTVDIVEKSS (347 aa). Residues D347 and 368-369 each bind NAD(+); that span reads DI. Residues A393, Y398, and 432–433 contribute to the UDP-alpha-D-glucuronate site; that span reads TS. The active-site Proton acceptor; for decarboxylase activity is E434. UDP-alpha-D-glucuronate-binding positions include R460, N492, 526–535, and Y613; that span reads KLIDGGKQKR. R619 acts as the Proton donor; for decarboxylase activity in catalysis.

In the N-terminal section; belongs to the Fmt family. UDP-L-Ara4N formyltransferase subfamily. This sequence in the C-terminal section; belongs to the NAD(P)-dependent epimerase/dehydratase family. UDP-glucuronic acid decarboxylase subfamily. As to quaternary structure, homohexamer, formed by a dimer of trimers.

The catalysed reaction is UDP-alpha-D-glucuronate + NAD(+) = UDP-beta-L-threo-pentopyranos-4-ulose + CO2 + NADH. The enzyme catalyses UDP-4-amino-4-deoxy-beta-L-arabinose + (6R)-10-formyltetrahydrofolate = UDP-4-deoxy-4-formamido-beta-L-arabinose + (6S)-5,6,7,8-tetrahydrofolate + H(+). It functions in the pathway nucleotide-sugar biosynthesis; UDP-4-deoxy-4-formamido-beta-L-arabinose biosynthesis; UDP-4-deoxy-4-formamido-beta-L-arabinose from UDP-alpha-D-glucuronate: step 1/3. Its pathway is nucleotide-sugar biosynthesis; UDP-4-deoxy-4-formamido-beta-L-arabinose biosynthesis; UDP-4-deoxy-4-formamido-beta-L-arabinose from UDP-alpha-D-glucuronate: step 3/3. The protein operates within bacterial outer membrane biogenesis; lipopolysaccharide biosynthesis. In terms of biological role, bifunctional enzyme that catalyzes the oxidative decarboxylation of UDP-glucuronic acid (UDP-GlcUA) to UDP-4-keto-arabinose (UDP-Ara4O) and the addition of a formyl group to UDP-4-amino-4-deoxy-L-arabinose (UDP-L-Ara4N) to form UDP-L-4-formamido-arabinose (UDP-L-Ara4FN). The modified arabinose is attached to lipid A and is required for resistance to polymyxin and cationic antimicrobial peptides. The protein is Bifunctional polymyxin resistance protein ArnA of Escherichia fergusonii (strain ATCC 35469 / DSM 13698 / CCUG 18766 / IAM 14443 / JCM 21226 / LMG 7866 / NBRC 102419 / NCTC 12128 / CDC 0568-73).